The chain runs to 254 residues: AA9 family lytic polysaccharide monooxygenase A (254 aa).

Residues 1-19 (MKYSILGLTALSFVASAAA) form the signal peptide. Cu(2+) is bound at residue H20. H20 carries the post-translational modification Methylhistidine. Position 28 (V28) interacts with (1,4-beta-D-glucosyl)n. N52 carries N-linked (GlcNAc...) asparagine glycosylation. C60 and C186 form a disulfide bridge. 4 residues coordinate (1,4-beta-D-glucosyl)n: V66, V67, D77, and N86. H97 lines the Cu(2+) pocket. Residue N129 is glycosylated (N-linked (GlcNAc...) asparagine). (1,4-beta-D-glucosyl)n contacts are provided by V148 and R159. O2 is bound by residues H166 and Q181. Y183 provides a ligand contact to Cu(2+).

It belongs to the polysaccharide monooxygenase AA9 family. It depends on Cu(2+) as a cofactor. In terms of processing, the catalytically essential N-terminal histidine His-20 is post-translationally modified by methylation to prevent protonation of the histidine side chain, and protect the critical active site of the enzyme from oxidative damage.

The protein resides in the secreted. It carries out the reaction [(1-&gt;4)-beta-D-glucosyl]n+m + reduced acceptor + O2 = 4-dehydro-beta-D-glucosyl-[(1-&gt;4)-beta-D-glucosyl]n-1 + [(1-&gt;4)-beta-D-glucosyl]m + acceptor + H2O.. With respect to regulation, the polyphenol cinnamtannin B1 contained in methanolic extract of Cinnamomum cassia (cinnamon) acts as an inhibitor of catalytic activity. Functionally, lytic polysaccharide monooxygenase (LPMO) that depolymerizes crystalline and amorphous polysaccharides via the oxidation of scissile alpha- or beta-(1-4)-glycosidic bonds, yielding C1 or C4 oxidation product. Catalysis by LPMOs requires the reduction of the active-site copper from Cu(II) to Cu(I) by a reducing agent and H(2)O(2) or O(2) as a cosubstrate. Is able to cleave phosphoric acid swollen cellulose (PASC) in the presence of a reducing agent, yielding a range of cellooligosaccharides dominated by cellobiose and cellotriose. Activity is less sensitive to the reducing agent potential when cleaving xylan, suggesting that distinct catalytic mechanisms exist for xylan and glucan cleavage. The polypeptide is AA9 family lytic polysaccharide monooxygenase A (Panus similis (Lentinoid fungus)).